Consider the following 364-residue polypeptide: Chorismate synthase (364 aa).

Residues 41–60 (MQHDLDRRRPGTSRYTTARR) form a disordered region. Residues Arg-48 and Arg-54 each contribute to the NADP(+) site. FMN contacts are provided by residues 125 to 127 (RSS), 238 to 239 (NA), Gly-278, 293 to 297 (KPTSS), and Arg-319.

The protein belongs to the chorismate synthase family. In terms of assembly, homotetramer. FMNH2 is required as a cofactor.

It catalyses the reaction 5-O-(1-carboxyvinyl)-3-phosphoshikimate = chorismate + phosphate. The protein operates within metabolic intermediate biosynthesis; chorismate biosynthesis; chorismate from D-erythrose 4-phosphate and phosphoenolpyruvate: step 7/7. Functionally, catalyzes the anti-1,4-elimination of the C-3 phosphate and the C-6 proR hydrogen from 5-enolpyruvylshikimate-3-phosphate (EPSP) to yield chorismate, which is the branch point compound that serves as the starting substrate for the three terminal pathways of aromatic amino acid biosynthesis. This reaction introduces a second double bond into the aromatic ring system. This chain is Chorismate synthase, found in Shewanella baltica (strain OS185).